A 241-amino-acid polypeptide reads, in one-letter code: Uracil-DNA glycosylase (241 aa).

Asp-73 acts as the Proton acceptor in catalysis.

The protein belongs to the uracil-DNA glycosylase (UDG) superfamily. UNG family.

Its subcellular location is the cytoplasm. It catalyses the reaction Hydrolyzes single-stranded DNA or mismatched double-stranded DNA and polynucleotides, releasing free uracil.. Functionally, excises uracil residues from the DNA which can arise as a result of misincorporation of dUMP residues by DNA polymerase or due to deamination of cytosine. The chain is Uracil-DNA glycosylase from Agrobacterium fabrum (strain C58 / ATCC 33970) (Agrobacterium tumefaciens (strain C58)).